Consider the following 855-residue polypeptide: DNA mismatch repair protein MutS (855 aa).

616-623 (GPNMGGKS) serves as a coordination point for ATP.

This sequence belongs to the DNA mismatch repair MutS family.

Its function is as follows. This protein is involved in the repair of mismatches in DNA. It is possible that it carries out the mismatch recognition step. This protein has a weak ATPase activity. In Salmonella dublin (strain CT_02021853), this protein is DNA mismatch repair protein MutS.